Reading from the N-terminus, the 419-residue chain is Pyrophosphate--fructose 6-phosphate 1-phosphotransferase (419 aa).

Gly-12 contributes to the diphosphate binding site. Asp-107 is a binding site for Mg(2+). Substrate-binding positions include 132-134 (TID), 178-180 (MGR), Glu-238, and 300-303 (YELR). The active-site Proton acceptor is the Asp-134.

Belongs to the phosphofructokinase type A (PFKA) family. PPi-dependent PFK group II subfamily. Clade 'Short' sub-subfamily. Homodimer. The cofactor is Mg(2+). Requires Co(2+) as cofactor. Mn(2+) serves as cofactor. Ni(2+) is required as a cofactor.

It is found in the cytoplasm. The catalysed reaction is beta-D-fructose 6-phosphate + diphosphate = beta-D-fructose 1,6-bisphosphate + phosphate + H(+). It functions in the pathway carbohydrate degradation; glycolysis; D-glyceraldehyde 3-phosphate and glycerone phosphate from D-glucose: step 3/4. With respect to regulation, non-allosteric. Functionally, catalyzes the phosphorylation of D-fructose 6-phosphate, the first committing step of glycolysis. Uses inorganic phosphate (PPi) as phosphoryl donor instead of ATP like common ATP-dependent phosphofructokinases (ATP-PFKs), which renders the reaction reversible, and can thus function both in glycolysis and gluconeogenesis. Consistently, PPi-PFK can replace the enzymes of both the forward (ATP-PFK) and reverse (fructose-bisphosphatase (FBPase)) reactions. In Thermotoga maritima (strain ATCC 43589 / DSM 3109 / JCM 10099 / NBRC 100826 / MSB8), this protein is Pyrophosphate--fructose 6-phosphate 1-phosphotransferase.